Consider the following 178-residue polypeptide: Oligoribonuclease (178 aa).

The Exonuclease domain occupies Leu7–Leu168. Tyr128 is an active-site residue.

Belongs to the oligoribonuclease family.

The protein resides in the cytoplasm. Functionally, 3'-to-5' exoribonuclease specific for small oligoribonucleotides. In Francisella tularensis subsp. tularensis (strain FSC 198), this protein is Oligoribonuclease.